Here is a 592-residue protein sequence, read N- to C-terminus: MKHQVAEILSKVIDQFKQEGVLDASFQPRVNVENTRDKSHGDFATNLAMMLTKVVGKPPREVAEMIVARLPESDVIEKVEIAGPGFINFFVLDVAKFDVLPSILEAGETFGECNVGQGRSVLVEYVSANPTGPLHVGHGRGAAYGASVASLLSKAGFRVSREYYVNDAGRQMDILAASTWLRYLQHCGEELTFPSNGYKGDYIFDIAQSLYEEKGDALRKPAENVFEGVADDEVTTADGETLGDKEKHIDDLIEKTKVLLGDEHYRVVFDKALDAILGDIREDLAEFGVEFENWFSERSLMDSGVIDAALEKLQAAGKIYEKKGALWFKSSEYGDEKDRVVVRENGLKTYFASDIAYHFNKLERGFDVLIDIWGSDHHGYVPRVKAAMQALDTNPEALEVLLVQFAVLYRGGEKLAMSTRSGQFVTLRELRDEVGADAARFFYVQRKSEQHMDFDLDLAKSKSNENPVYYIQYAHARICQVLSLAEERGYQLDTEMGLANLNRLTQEPEADLATLLAKYPEIIARAALAYEPHQIAYYLKELAHGLHAYYNSTQFIVEYEPLRNARLTLVVAVRQVLQNGLKLLSVAAPEKM.

The 'HIGH' region signature appears at alanine 128–histidine 138.

It belongs to the class-I aminoacyl-tRNA synthetase family. As to quaternary structure, monomer.

Its subcellular location is the cytoplasm. It catalyses the reaction tRNA(Arg) + L-arginine + ATP = L-arginyl-tRNA(Arg) + AMP + diphosphate. In Hydrogenovibrio crunogenus (strain DSM 25203 / XCL-2) (Thiomicrospira crunogena), this protein is Arginine--tRNA ligase.